An 860-amino-acid polypeptide reads, in one-letter code: MSQHVGHGRRPRTPGPPVRSIRPFKSSEQYLEAMKEDLAEWLRDLYGLDIDADNFLRVLETGLVLCRHANTVTEAALAFLAEAPERAQKIPMPQAGVFCNGAAQPGTFQARDNISNFIQWCRKEMGIQEVLMFETEDLVLRKNVKSVVLCLLELGRRAWRFGVAAPALVHLEEEIDEELRRDLALPSPDPPPPIPPARRPCHFHNLDQMVQSLVSHCTCPVQFSMVKISEGKYRVGDSNTLIFIRILRSHVMVRVGGGWDTLGHYLDKHDPCRCTSLSHKPGSFLKPPGPPVQHEVKVQDGPSQPQPTMTISRSQSPLPPVDWKTYTSSSRKLRPPTPSSPGLRSEPPVRARTLREDPLPRSQEKPTPSQRMSSPGPQFSSTCRGPDLQSTLSGKRANRCPGEPPRGRTPTLWVHKEAGSRGTHTKAPTPQRLQIPEATSKRTSARGPSPPPRSSSLASPHMIWVLHQGASPQLSEPMTVHSSSPGKGLTKIPIRLSPARPPTPGRSSLGTEGEYSTGRGSISSRALEGNLDRSTHGHHSVEASGDHQTDIQTTSETEDPRSLGTQKWKERHTSLALGRRREQALYDNLKEEVVANMKLLEVGTAYTQGTRSQAIPRSGVYVPSLGGRWPEPGGPYDKVIRELVQGPPPLLKVDLKAWKVGSECLPRPIVDPGSPKEKLGSRETGTRIKASLNAEDTTVRTVSPARGQGCSTPPVSANLEAPTRSCSDPSSDKASVCLGKGKRTLRKPQKIPSIYKLKLRPRIRPRRDHRPEKRPSRIPKPLPYSCLVLARTAPGSRLLKATLGGKGGVPCQVNGTGKKEEEKKKGGSNISLESSIQPAESQEPLKLGGTPLSPEEESWV.

Residues 1–12 (MSQHVGHGRRPR) show a composition bias toward basic residues. The tract at residues 1 to 22 (MSQHVGHGRRPRTPGPPVRSIR) is disordered. The Calponin-homology (CH) domain maps to 32 to 159 (EAMKEDLAEW…CLLELGRRAW (128 aa)). Residues 201–273 (CHFHNLDQMV…HYLDKHDPCR (73 aa)) enclose the GAR domain. Disordered regions lie at residues 281–459 (PGSF…SLAS), 473–574 (QLSE…RHTS), 697–743 (TTVR…KGKR), 758–781 (KLRP…IPKP), and 801–860 (ATLG…ESWV). Residues 301 to 316 (GPSQPQPTMTISRSQS) show a composition bias toward polar residues. A compositionally biased stretch (basic and acidic residues) spans 347–364 (PPVRARTLREDPLPRSQE). Composition is skewed to polar residues over residues 365–393 (KPTP…STLS) and 473–485 (QLSE…SSSP). Residues 431–860 (QRLQIPEATS…PLSPEEESWV (430 aa)) are interaction with ADORA2A and GNAS. A compositionally biased stretch (basic and acidic residues) spans 530–549 (NLDRSTHGHHSVEASGDHQT). Positions 724–733 (RSCSDPSSDK) are enriched in polar residues. Over residues 758-768 (KLRPRIRPRRD) the composition is skewed to basic residues. A compositionally biased stretch (polar residues) spans 828-840 (SNISLESSIQPAE).

It belongs to the GAS2 family. In terms of assembly, interacts with ADORA2A (via its cytoplasmic C-terminal domain). Interacts with GNAS, GNAL, GNAQ, and GNA13. Interacts with MAPRE1. As to expression, expressed in tracheal epithelial cells (at protein level).

The protein resides in the cytoplasm. It is found in the cytoskeleton. The protein localises to the cell membrane. It localises to the stress fiber. Its subcellular location is the cilium basal body. Its function is as follows. Involved in the cross-linking of microtubules and microfilaments. Regulates microtubule dynamics and stability by interacting with microtubule plus-end tracking proteins, such as MAPRE1, to regulate microtubule growth along actin stress fibers. Enhances ADORA2-mediated adenylyl cyclase activation by acting as a scaffold to recruit trimeric G-protein complexes to ADORA2A. Regulates ciliary orientation and performance in cells located in the airway. This Mus musculus (Mouse) protein is GAS2-like protein 2 (Gas2l2).